The sequence spans 473 residues: Photosystem II CP43 reaction center protein (473 aa).

The propeptide occupies 1–14 (MKTLYSLRRFYHVE). N-acetylthreonine is present on threonine 15. Threonine 15 carries the phosphothreonine modification. 5 helical membrane passes run 69–93 (LFEV…PHLA), 134–155 (LIGP…KDKN), 178–200 (KACY…RIIT), 255–275 (KPWA…LSYS), and 291–312 (WFNN…ASQA). Residue glutamate 367 coordinates [CaMn4O5] cluster. A helical transmembrane segment spans residues 447–471 (RARAAAAGFEKGIERETEPVLFMKP).

This sequence belongs to the PsbB/PsbC family. PsbC subfamily. In terms of assembly, PSII is composed of 1 copy each of membrane proteins PsbA, PsbB, PsbC, PsbD, PsbE, PsbF, PsbH, PsbI, PsbJ, PsbK, PsbL, PsbM, PsbT, PsbX, PsbY, PsbZ, Psb30/Ycf12, at least 3 peripheral proteins of the oxygen-evolving complex and a large number of cofactors. It forms dimeric complexes. It depends on Binds multiple chlorophylls and provides some of the ligands for the Ca-4Mn-5O cluster of the oxygen-evolving complex. It may also provide a ligand for a Cl- that is required for oxygen evolution. PSII binds additional chlorophylls, carotenoids and specific lipids. as a cofactor.

It localises to the plastid. Its subcellular location is the chloroplast thylakoid membrane. One of the components of the core complex of photosystem II (PSII). It binds chlorophyll and helps catalyze the primary light-induced photochemical processes of PSII. PSII is a light-driven water:plastoquinone oxidoreductase, using light energy to abstract electrons from H(2)O, generating O(2) and a proton gradient subsequently used for ATP formation. The polypeptide is Photosystem II CP43 reaction center protein (Mesostigma viride (Green alga)).